A 113-amino-acid chain; its full sequence is Small ribosomal subunit protein uS15 (113 aa).

The protein belongs to the universal ribosomal protein uS15 family. In terms of assembly, part of the 30S ribosomal subunit. Forms a bridge to the 50S subunit in the 70S ribosome, contacting the 23S rRNA.

In terms of biological role, one of the primary rRNA binding proteins, it binds directly to 16S rRNA where it helps nucleate assembly of the platform of the 30S subunit by binding and bridging several RNA helices of the 16S rRNA. Its function is as follows. Forms an intersubunit bridge (bridge B4) with the 23S rRNA of the 50S subunit in the ribosome. This Haemophilus influenzae (strain PittEE) protein is Small ribosomal subunit protein uS15.